Reading from the N-terminus, the 117-residue chain is uncharacterized protein (117 aa).

The protein resides in the cytoplasm. It is found in the nucleus. This is an uncharacterized protein from Schizosaccharomyces pombe (strain 972 / ATCC 24843) (Fission yeast).